The following is a 308-amino-acid chain: Low density lipoprotein receptor adapter protein 1 (308 aa).

N-acetylmethionine is present on methionine 1. Serine 14 is subject to Phosphoserine. Residues leucine 41–arginine 195 enclose the PID domain. A disordered region spans residues glutamate 179 to serine 201. A phosphoserine mark is found at serine 198 and serine 201. Residues leucine 211–glutamate 215 carry the Clathrin box motif. The interval tryptophan 248–leucine 275 is AP-2 complex binding. The short motif at glutamate 256 to arginine 265 is the [DE]-X(1,2)-F-X-X-[FL]-X-X-X-R motif element. Residues proline 288–phenylalanine 308 are disordered.

In terms of assembly, interacts (via PID domain) with LDLR (via NPXY motif). Binds to soluble clathrin trimers. Interacts with AP2B1; the interaction mediates the association with the AP-2 complex. Interacts with VLDLR. Interacts with LRP2.

It localises to the cytoplasm. Functionally, adapter protein (clathrin-associated sorting protein (CLASP)) required for efficient endocytosis of the LDL receptor (LDLR) in polarized cells such as hepatocytes and lymphocytes, but not in non-polarized cells (fibroblasts). May be required for LDL binding and internalization but not for receptor clustering in coated pits. May facilitate the endocytosis of LDLR and LDLR-LDL complexes from coated pits by stabilizing the interaction between the receptor and the structural components of the pits. May also be involved in the internalization of other LDLR family members. Binds to phosphoinositides, which regulate clathrin bud assembly at the cell surface. Required for trafficking of LRP2 to the endocytic recycling compartment which is necessary for LRP2 proteolysis, releasing a tail fragment which translocates to the nucleus and mediates transcriptional repression. The protein is Low density lipoprotein receptor adapter protein 1 of Mus musculus (Mouse).